A 513-amino-acid polypeptide reads, in one-letter code: uncharacterized protein (513 aa).

Residues His11–Thr219 form the CYTH domain. One can recognise a CHAD domain in the interval Pro228–Lys506.

This is an uncharacterized protein from Mycobacterium tuberculosis (strain ATCC 25618 / H37Rv).